The sequence spans 504 residues: Glucose-6-phosphate isomerase (504 aa).

Glutamate 333 serves as the catalytic Proton donor. Catalysis depends on residues histidine 364 and lysine 473.

It belongs to the GPI family.

It localises to the cytoplasm. It carries out the reaction alpha-D-glucose 6-phosphate = beta-D-fructose 6-phosphate. It functions in the pathway carbohydrate biosynthesis; gluconeogenesis. It participates in carbohydrate degradation; glycolysis; D-glyceraldehyde 3-phosphate and glycerone phosphate from D-glucose: step 2/4. Functionally, catalyzes the reversible isomerization of glucose-6-phosphate to fructose-6-phosphate. In Xanthomonas oryzae pv. oryzae (strain KACC10331 / KXO85), this protein is Glucose-6-phosphate isomerase.